The primary structure comprises 63 residues: uncharacterized protein (63 aa).

Residues 38 to 58 (ISLFIILHLCLLVCLLLSFYF) form a helical membrane-spanning segment.

The protein localises to the membrane. This is an uncharacterized protein from Saccharomyces cerevisiae (strain ATCC 204508 / S288c) (Baker's yeast).